The chain runs to 176 residues: Lactoylglutathione lyase (176 aa).

A VOC domain is found at 23–167 (VFNHTMLRVK…DGYWVEIVQA (145 aa)). H26 is a Ni(2+) binding site. R30 provides a ligand contact to substrate. Residue E92 participates in Ni(2+) binding. Residues N96, R114, and H118 each contribute to the substrate site. Positions 118 and 163 each coordinate Ni(2+). E163 (proton donor/acceptor) is an active-site residue.

Belongs to the glyoxalase I family. As to quaternary structure, monomer. Requires Ni(2+) as cofactor. Zn(2+) serves as cofactor.

It carries out the reaction (R)-S-lactoylglutathione = methylglyoxal + glutathione. Its pathway is secondary metabolite metabolism; methylglyoxal degradation; (R)-lactate from methylglyoxal: step 1/2. In terms of biological role, catalyzes the conversion of hemimercaptal, formed from methylglyoxal and glutathione, to S-lactoylglutathione. In Pseudomonas aeruginosa (strain ATCC 15692 / DSM 22644 / CIP 104116 / JCM 14847 / LMG 12228 / 1C / PRS 101 / PAO1), this protein is Lactoylglutathione lyase (gloA).